The primary structure comprises 1757 residues: 1-phosphatidylinositol-3-phosphate 5-kinase FAB1A (1757 aa).

The FYVE-type zinc-finger motif lies at 36 to 102 (DQSCPVCYEC…VCNYCYKQWE (67 aa)). The Zn(2+) site is built by Cys-42, Cys-45, Cys-58, Cys-61, Cys-66, Cys-69, Cys-94, and Cys-97. 4 disordered regions span residues 125–193 (ARSV…SDNQ), 276–297 (KTRQ…CEES), 313–346 (LPPE…YLRP), and 684–709 (AEKS…NFTS). Residues 134 to 145 (NSSNCTIDSTAG) are compositionally biased toward polar residues. Positions 317 to 337 (PENEEDEREAVLSDDDGDEGD) are enriched in acidic residues. Positions 1014–1087 (LQKESKEVIK…LQQMLNVVKD (74 aa)) form a coiled coil. One can recognise a PIPK domain in the interval 1395-1719 (SFSLFDSVNL…RFRKAMTAYF (325 aa)). Positions 1729–1739 (AAVVPSNSSSA) are enriched in low complexity. The disordered stretch occupies residues 1729–1757 (AAVVPSNSSSAEVKEEEEKDNPQAVGNKS).

As to quaternary structure, component of the PI(3,5)P2 regulatory complex at least composed of ATG18, SAC/FIG4, FAB1 and VAC14. Mg(2+) is required as a cofactor. Requires Mn(2+) as cofactor. Ubiquitous with highest expression levels in pollen, seed, and senescent leaves.

Its subcellular location is the endosome membrane. It catalyses the reaction a 1,2-diacyl-sn-glycero-3-phospho-(1D-myo-inositol-3-phosphate) + ATP = a 1,2-diacyl-sn-glycero-3-phospho-(1D-myo-inositol-3,5-bisphosphate) + ADP + H(+). Functionally, the PI(3,5)P2 regulatory complex regulates both the synthesis and turnover of phosphatidylinositol 3,5-bisphosphate (PtdIns(3,5)P2). Catalyzes the phosphorylation of phosphatidylinositol 3-phosphate on the fifth hydroxyl of the myo-inositol ring, to form phosphatidylinositol 3,5-bisphosphate. Plays an important role in maintenance of endomembrane homeostasis including endocytosis, vacuole formation, and vacuolar acidification processes. Required for development of viable pollen. Might mediate recycling of auxin transporters. In Arabidopsis thaliana (Mouse-ear cress), this protein is 1-phosphatidylinositol-3-phosphate 5-kinase FAB1A (FAB1A).